Consider the following 341-residue polypeptide: Heterogeneous nuclear ribonucleoproteins A2/B1 (341 aa).

RRM domains lie at 9–92 and 100–179; these read RKLF…ESGK and KKLF…LSRQ. A Glycyl lysine isopeptide (Lys-Gly) (interchain with G-Cter in SUMO2) cross-link involves residue Lys10. A Phosphoserine modification is found at Ser17. Arg26 bears the Omega-N-methylarginine mark. Ser73 is subject to Phosphoserine. Lys92 is modified (N6,N6-dimethyllysine; alternate). Residue Lys92 forms a Glycyl lysine isopeptide (Lys-Gly) (interchain with G-Cter in SUMO2); alternate linkage. Residues Lys100, Lys108, and Lys125 each participate in a glycyl lysine isopeptide (Lys-Gly) (interchain with G-Cter in SUMO2) cross-link. A Phosphothreonine modification is found at Thr128. Ser137 carries the phosphoserine modification. A Glycyl lysine isopeptide (Lys-Gly) (interchain with G-Cter in SUMO2) cross-link involves residue Lys140. A Phosphothreonine modification is found at Thr147. Residues Lys156 and Lys161 each participate in a glycyl lysine isopeptide (Lys-Gly) (interchain with G-Cter in SUMO2); alternate cross-link. Residues Lys156 and Lys161 each carry the N6-acetyllysine; alternate modification. Position 164 is a phosphothreonine (Thr164). Residue Lys174 forms a Glycyl lysine isopeptide (Lys-Gly) (interchain with G-Cter in SUMO2) linkage. Ser177 and Ser189 each carry phosphoserine. Residues 181-341 are disordered; sequence MQEVQSSRSG…SGGYGGRSRY (161 aa). Residues 190–211 are compositionally biased toward gly residues; it reads GRGGNFGFGDSRGGGGNFGPGP. Arg191 carries the post-translational modification Asymmetric dimethylarginine; alternate. Arg191 carries the post-translational modification Dimethylated arginine; alternate. Arg191 bears the Omega-N-methylarginine; alternate mark. Residue Ser200 is modified to Phosphoserine. Asymmetric dimethylarginine; alternate is present on Arg201. Dimethylated arginine; alternate is present on Arg201. At Arg201 the chain carries Omega-N-methylarginine; alternate. A Phosphoserine modification is found at Ser213. Arg216 is subject to Omega-N-methylarginine. A phosphoserine mark is found at Ser219 and Ser224. At Arg226 the chain carries Omega-N-methylarginine. Residue Ser247 is modified to Phosphoserine. Arg254 bears the Asymmetric dimethylarginine; alternate mark. An Omega-N-methylarginine; alternate modification is found at Arg254. Residues 296–335 form a nuclear targeting sequence region; that stretch reads QQPSNYGPMKSGNFGGSRNMGGPYGGGNYGPGGSGGSGGY. Positions 308–341 are enriched in gly residues; it reads NFGGSRNMGGPYGGGNYGPGGSGGSGGYGGRSRY. Ser312 carries the post-translational modification Phosphoserine. Arg313 carries the omega-N-methylarginine modification. Tyr319 carries the phosphotyrosine modification. 2 positions are modified to phosphoserine: Ser329 and Ser332. The residue at position 335 (Tyr335) is a Phosphotyrosine. The residue at position 338 (Arg338) is an Omega-N-methylarginine.

In terms of assembly, identified in the spliceosome C complex. Identified in a IGF2BP1-dependent mRNP granule complex containing untranslated mRNAs. Interacts with IGF2BP1. Interacts with C9orf72. Interacts with DGCR8. Interacts with TARDBP. Interacts with CKAP5. Interacts with PPIA/CYPA. Interacts (via C-terminus) with FAM76B; the interaction results in retention of HNRNPA2B1 in the nucleus and inhibition of the NF-kappa-B-mediated inflammatory pathway. Interacts with NF-kappa-B inhibitors NFKBIA and NFKBIE; the interaction may be mediated by the RRM2 domain of HNRNPA2B1, and HNRNPA2B1 may interact simultaneously with FAM76B and either NFKBIA or NFKBIE to form a complex. In terms of processing, sumoylated in exosomes, promoting miRNAs-binding. Asymmetric dimethylation at Arg-254 constitutes the major methylation site. According to a report, methylation affects subcellular location and promotes nuclear localization. According to another report, methylation at Arg-254 does not influence nucleocytoplasmic shuttling.

Its subcellular location is the nucleus. The protein resides in the nucleoplasm. The protein localises to the cytoplasmic granule. It is found in the secreted. It localises to the extracellular exosome. Functionally, heterogeneous nuclear ribonucleoprotein (hnRNP) that associates with nascent pre-mRNAs, packaging them into hnRNP particles. The hnRNP particle arrangement on nascent hnRNA is non-random and sequence-dependent and serves to condense and stabilize the transcripts and minimize tangling and knotting. Packaging plays a role in various processes such as transcription, pre-mRNA processing, RNA nuclear export, subcellular location, mRNA translation and stability of mature mRNAs. Forms hnRNP particles with at least 20 other different hnRNP and heterogeneous nuclear RNA in the nucleus. Involved in transport of specific mRNAs to the cytoplasm in oligodendrocytes and neurons: acts by specifically recognizing and binding the A2RE (21 nucleotide hnRNP A2 response element) or the A2RE11 (derivative 11 nucleotide oligonucleotide) sequence motifs present on some mRNAs, and promotes their transport to the cytoplasm. Specifically binds single-stranded telomeric DNA sequences, protecting telomeric DNA repeat against endonuclease digestion. Also binds other RNA molecules, such as primary miRNA (pri-miRNAs): acts as a nuclear 'reader' of the N6-methyladenosine (m6A) mark by specifically recognizing and binding a subset of nuclear m6A-containing pri-miRNAs. Binding to m6A-containing pri-miRNAs promotes pri-miRNA processing by enhancing binding of DGCR8 to pri-miRNA transcripts. Involved in miRNA sorting into exosomes following sumoylation, possibly by binding (m6A)-containing pre-miRNAs. Acts as a regulator of efficiency of mRNA splicing, possibly by binding to m6A-containing pre-mRNAs. Plays a role in the splicing of pyruvate kinase PKM by binding repressively to sequences flanking PKM exon 9, inhibiting exon 9 inclusion and resulting in exon 10 inclusion and production of the PKM M2 isoform. This Bos taurus (Bovine) protein is Heterogeneous nuclear ribonucleoproteins A2/B1 (HNRNPA2B1).